We begin with the raw amino-acid sequence, 314 residues long: Putative integrase/recombinase y4rB (314 aa).

A Core-binding (CB) domain is found at Ser2–Ala79. Residues Ala100–Arg304 enclose the Tyr recombinase domain. Residues Arg147, Lys172, His248, Arg251, and His282 contribute to the active site. Tyr291 serves as the catalytic O-(3'-phospho-DNA)-tyrosine intermediate.

It belongs to the 'phage' integrase family.

The polypeptide is Putative integrase/recombinase y4rB (Sinorhizobium fredii (strain NBRC 101917 / NGR234)).